A 178-amino-acid polypeptide reads, in one-letter code: UPF0228 protein MM_0401 (178 aa).

Belongs to the UPF0228 family.

This is UPF0228 protein MM_0401 from Methanosarcina mazei (strain ATCC BAA-159 / DSM 3647 / Goe1 / Go1 / JCM 11833 / OCM 88) (Methanosarcina frisia).